Reading from the N-terminus, the 338-residue chain is Acetoin:2,6-dichlorophenolindophenol oxidoreductase subunit beta (338 aa).

As to quaternary structure, tetramer of 2 alpha and 2 beta subunits.

It participates in ketone degradation; acetoin degradation. Its function is as follows. Catalyzes the 2,6-dichlorophenolindophenol-dependent cleavage of acetoin into acetate and acetaldehyde, in vitro. The beta subunit is probably not the catalytic subunit of the enzyme. This is Acetoin:2,6-dichlorophenolindophenol oxidoreductase subunit beta (acoB) from Cupriavidus necator (strain ATCC 17699 / DSM 428 / KCTC 22496 / NCIMB 10442 / H16 / Stanier 337) (Ralstonia eutropha).